The sequence spans 424 residues: Probable serine/threonine-protein kinase PBL12 (424 aa).

In terms of domain architecture, Protein kinase spans 88-368; the sequence is FSRSNMLGEG…CEVVKVLESI (281 aa). ATP is bound by residues 94 to 102 and Lys-123; that span reads LGEGGFGPV. Catalysis depends on Asp-218, which acts as the Proton acceptor.

This sequence belongs to the protein kinase superfamily. Ser/Thr protein kinase family. Expressed specifically in roots.

The protein resides in the cell membrane. It carries out the reaction L-seryl-[protein] + ATP = O-phospho-L-seryl-[protein] + ADP + H(+). It catalyses the reaction L-threonyl-[protein] + ATP = O-phospho-L-threonyl-[protein] + ADP + H(+). Its function is as follows. May play a role in the signal transduction pathway of osmotic stress. May be involved in plant defense signaling. The sequence is that of Probable serine/threonine-protein kinase PBL12 from Arabidopsis thaliana (Mouse-ear cress).